A 310-amino-acid polypeptide reads, in one-letter code: GMP synthase [glutamine-hydrolyzing] subunit B (310 aa).

Residues 2 to 185 (FKTEPFIEES…LGLPDQIAHR (184 aa)) enclose the GMPS ATP-PPase domain. Residue 29 to 35 (SGGVDSA) participates in ATP binding.

As to quaternary structure, heterodimer composed of a glutamine amidotransferase subunit (A) and a GMP-binding subunit (B).

It catalyses the reaction XMP + L-glutamine + ATP + H2O = GMP + L-glutamate + AMP + diphosphate + 2 H(+). Its pathway is purine metabolism; GMP biosynthesis; GMP from XMP (L-Gln route): step 1/1. Its function is as follows. Catalyzes the synthesis of GMP from XMP. The chain is GMP synthase [glutamine-hydrolyzing] subunit B from Methanococcus maripaludis (strain DSM 14266 / JCM 13030 / NBRC 101832 / S2 / LL).